A 317-amino-acid chain; its full sequence is Ferrochelatase (317 aa).

H187 and E268 together coordinate Fe cation.

The protein belongs to the ferrochelatase family.

It is found in the cytoplasm. The catalysed reaction is heme b + 2 H(+) = protoporphyrin IX + Fe(2+). Its pathway is porphyrin-containing compound metabolism; protoheme biosynthesis; protoheme from protoporphyrin-IX: step 1/1. Catalyzes the ferrous insertion into protoporphyrin IX. This chain is Ferrochelatase, found in Campylobacter concisus (strain 13826).